The following is a 606-amino-acid chain: Threonine--tRNA ligase (606 aa).

The segment at 212-503 (DHRKLGVEMK…LLEHTAGELP (292 aa)) is catalytic. Cysteine 304, histidine 355, and histidine 480 together coordinate Zn(2+).

This sequence belongs to the class-II aminoacyl-tRNA synthetase family. Homodimer. The cofactor is Zn(2+).

It localises to the cytoplasm. The enzyme catalyses tRNA(Thr) + L-threonine + ATP = L-threonyl-tRNA(Thr) + AMP + diphosphate + H(+). Functionally, catalyzes the attachment of threonine to tRNA(Thr) in a two-step reaction: L-threonine is first activated by ATP to form Thr-AMP and then transferred to the acceptor end of tRNA(Thr). Also edits incorrectly charged L-seryl-tRNA(Thr). The polypeptide is Threonine--tRNA ligase (Campylobacter concisus (strain 13826)).